Reading from the N-terminus, the 464-residue chain is Cyclin-dependent kinase 8 (464 aa).

The interval 1–15 (MGYDFKVKLTGERER) is interaction with CCNC. One can recognise a Protein kinase domain in the interval 21–335 (EYEGCKVGRG…SEQAMQDPYF (315 aa)). Residues 27 to 35 (VGRGTYGHV) and lysine 52 contribute to the ATP site. The active-site Proton acceptor is the aspartate 151. The segment at 360 to 464 (TEEEPEDKAD…PQYSHQTHRY (105 aa)) is disordered. A compositionally biased stretch (low complexity) spans 373 to 390 (QQQQQGNNHTNGAGHTGN). Polar residues-rich tracts occupy residues 410-426 (TATS…QRSN) and 434-446 (PGPS…SSMG). The span at 447 to 464 (YSSTSQQPPQYSHQTHRY) shows a compositional bias: low complexity.

The protein belongs to the protein kinase superfamily. CMGC Ser/Thr protein kinase family. CDC2/CDKX subfamily. In terms of assembly, component of the Mediator complex. Interacts with ccnc. The cofactor is Mg(2+).

The protein resides in the nucleus. The catalysed reaction is L-seryl-[protein] + ATP = O-phospho-L-seryl-[protein] + ADP + H(+). It carries out the reaction L-threonyl-[protein] + ATP = O-phospho-L-threonyl-[protein] + ADP + H(+). It catalyses the reaction [DNA-directed RNA polymerase] + ATP = phospho-[DNA-directed RNA polymerase] + ADP + H(+). Component of the Mediator complex, a coactivator involved in regulated gene transcription of nearly all RNA polymerase II-dependent genes. Mediator functions as a bridge to convey information from gene-specific regulatory proteins to the basal RNA polymerase II transcription machinery. Mediator is recruited to promoters by direct interactions with regulatory proteins and serves as a scaffold for the assembly of a functional pre-initiation complex with RNA polymerase II and the general transcription factors. Phosphorylates the CTD (C-terminal domain) of the large subunit of RNA polymerase II (RNAp II), which may inhibit the formation of a transcription initiation complex. The protein is Cyclin-dependent kinase 8 (cdk8) of Danio rerio (Zebrafish).